Consider the following 85-residue polypeptide: MAHKKGLGSTKNGRDSQAKRLGVKRYEGQVVRAGNILVRQRGTRFKPGKNVGMGRDFTLFALVDGVVEFQDRGRLGRYVHVRPLA.

Residues 1-21 (MAHKKGLGSTKNGRDSQAKRL) are disordered.

This sequence belongs to the bacterial ribosomal protein bL27 family.

The polypeptide is Large ribosomal subunit protein bL27 (Thermus thermophilus (strain ATCC BAA-163 / DSM 7039 / HB27)).